We begin with the raw amino-acid sequence, 1146 residues long: Integrin alpha-PS1 (1146 aa).

A signal peptide spans 1 to 30 (MLELPFTTIRPNCRLRQNLGILIILQCVLT). Topologically, residues 31-1085 (CYNFNLEQRL…NQQRDTSIPW (1055 aa)) are extracellular. FG-GAP repeat units lie at residues 38–105 (QRLP…FDDC), 121–186 (LSPP…FEEV), 193–245 (RPVQ…YLQR), 254–303 (HSDL…KSTD), 304–366 (NPIP…TLPM), 367–422 (KYTL…GLNS), and 432–494 (ELGG…RKEL). N-linked (GlcNAc...) asparagine glycosylation is found at N68, N86, and N147. Residues N470, N511, N657, N680, N711, N718, N761, and N928 are each glycosylated (N-linked (GlcNAc...) asparagine). The tract at residues 938 to 958 (YYSSSHRDDHSDDTQSNRNRV) is disordered. Basic and acidic residues predominate over residues 942-952 (SHRDDHSDDTQ). N-linked (GlcNAc...) asparagine glycosylation occurs at N1027. The chain crosses the membrane as a helical span at residues 1086–1106 (LIIILGIVGGLLLLALVTYVL). Residues 1107–1146 (WKVGFFKRIRPTDPTLSGNLEKMNEEKPFLAPSKNTHHVF) lie on the Cytoplasmic side of the membrane.

This sequence belongs to the integrin alpha chain family. As to quaternary structure, heterodimer of an alpha and a beta subunit. The alpha subunit is composed of a heavy and a light chain linked by a disulfide bond. Alpha-PS1 associates with beta-PS. As to expression, expressed in follicle cells (at protein level). At syncytial blastoderm stage, expressed in the ectoderm but not in the mesodermal precursors. At embryonic stage 7, expressed in dorsal and ventrolateral ectoderm and in some yolk nuclei. At late stage 10, expression is homogeneous in the ectoderm and is particularly abundant in the anterior and posterior midgut primordia. At stage 11, strongly expressed in a metameric pattern in the ectoderm, in the proctodeum and in the posterior midgut primordium. At stage 12, accumulates at the segment boundaries that start to become morphologically visible, similar expression pattern is observed in the central nervous system. In third larval instar wing imaginal disk, strongly expressed in the dorsal compartment, in the adepithelial cells and in patches on the peripodial membrane covering the imaginal disk to the outside.

It localises to the apical cell membrane. The protein localises to the lateral cell membrane. The protein resides in the basal cell membrane. In terms of biological role, integrin alpha-PS1/beta-PS is a receptor for laminin. The sequence is that of Integrin alpha-PS1 (mew) from Drosophila melanogaster (Fruit fly).